A 277-amino-acid chain; its full sequence is Alternative cytochrome c oxidase subunit 2 (277 aa).

At 1 to 40 (MAVALILLLIAIGSVLFHLFSPWWWTPIATNWGYIDDTIN) the chain is on the periplasmic side. A helical membrane pass occupies residues 41 to 61 (ITFWITGFVFTAVILFMAYCV). Over 62-83 (FRFHHKEGRQAAYNPENKKLEW) the chain is Cytoplasmic. A helical transmembrane segment spans residues 84–104 (WLSVGTGVGVAAMLAPGLVVW). Residues 105–277 (HQFVTVPADA…VRAKYNSGDD (173 aa)) are Periplasmic-facing. Cu cation-binding residues include histidine 190, cysteine 225, cysteine 229, and histidine 233.

The protein belongs to the cytochrome c oxidase subunit 2 family.

It is found in the cell membrane. The enzyme catalyses 4 Fe(II)-[cytochrome c] + O2 + 8 H(+)(in) = 4 Fe(III)-[cytochrome c] + 2 H2O + 4 H(+)(out). Functionally, cytochrome c oxidase is the component of the respiratory chain that catalyzes the reduction of oxygen to water. Subunits 1-3 form the functional core of the enzyme complex. Subunit 2 transfers the electrons from cytochrome c via its binuclear copper A center to the bimetallic center of the catalytic subunit 1. In Bradyrhizobium diazoefficiens (strain JCM 10833 / BCRC 13528 / IAM 13628 / NBRC 14792 / USDA 110), this protein is Alternative cytochrome c oxidase subunit 2 (coxM).